Consider the following 510-residue polypeptide: 2,3-bisphosphoglycerate-independent phosphoglycerate mutase (510 aa).

Residues D12 and S62 each contribute to the Mn(2+) site. The Phosphoserine intermediate role is filled by S62. Substrate contacts are provided by residues H123, 153-154, R185, R191, 260-263, and K335; these read RD and RPDR. D402, H406, D443, H444, and H461 together coordinate Mn(2+).

This sequence belongs to the BPG-independent phosphoglycerate mutase family. In terms of assembly, monomer. Mn(2+) is required as a cofactor.

It carries out the reaction (2R)-2-phosphoglycerate = (2R)-3-phosphoglycerate. It participates in carbohydrate degradation; glycolysis; pyruvate from D-glyceraldehyde 3-phosphate: step 3/5. Its function is as follows. Catalyzes the interconversion of 2-phosphoglycerate and 3-phosphoglycerate. This is 2,3-bisphosphoglycerate-independent phosphoglycerate mutase from Listeria innocua serovar 6a (strain ATCC BAA-680 / CLIP 11262).